The following is a 224-amino-acid chain: Peroxiredoxin-6 (224 aa).

The region spanning 5–169 (LLLGDEAPNF…ILRVVDSLQL (165 aa)) is the Thioredoxin domain. Positions 31-40 (DSWGILFSHP) are required and sufficient for targeting to lysosomes and lamellar bodies. T44 bears the Phosphothreonine mark. C47 acts as the Cysteine sulfenic acid (-SOH) intermediate; for peroxidase activity in catalysis. K63 is modified (N6-acetyllysine). Y89 bears the Phosphotyrosine mark. Position 93 is a phosphothreonine (T93). D140 (for phospholipase activity) is an active-site residue. T177 is subject to Phosphothreonine; by MAPK. The residue at position 209 (K209) is an N6-acetyllysine; alternate. Residue K209 is modified to N6-succinyllysine; alternate.

This sequence belongs to the peroxiredoxin family. Prx6 subfamily. As to quaternary structure, homodimer. Interacts with GSTP1; mediates PRDX6 glutathionylation and regeneration. Interacts with APEX1. Interacts with STH. May interact with FAM168B. May interact with HTR2A. Post-translationally, irreversibly inactivated by overoxidation of Cys-47 to sulfinic acid (Cys-SO(2)H) and sulfonic acid (Cys-SO(3)H) forms upon oxidative stress. In terms of processing, phosphorylation at Thr-177 by MAP kinases increases the phospholipase activity of the enzyme. The phosphorylated form exhibits a greater lysophosphatidylcholine acyltransferase activity compared to the non-phosphorylated form. In terms of tissue distribution, highly expressed in heart, kidney and liver. Moderate expression in brain and stomach. Very low levels in intestine.

It localises to the cytoplasm. Its subcellular location is the lysosome. It catalyses the reaction a hydroperoxide + 2 glutathione = an alcohol + glutathione disulfide + H2O. It carries out the reaction a 1,2-diacyl-sn-glycero-3-phosphocholine + H2O = a 1-acyl-sn-glycero-3-phosphocholine + a fatty acid + H(+). The catalysed reaction is a 1-acyl-sn-glycero-3-phosphocholine + an acyl-CoA = a 1,2-diacyl-sn-glycero-3-phosphocholine + CoA. The enzyme catalyses 1-hexadecanoyl-sn-glycero-3-phosphocholine + hexadecanoyl-CoA = 1,2-dihexadecanoyl-sn-glycero-3-phosphocholine + CoA. It catalyses the reaction 1,2-dihexadecanoyl-sn-glycero-3-phosphocholine + H2O = 1-hexadecanoyl-sn-glycero-3-phosphocholine + hexadecanoate + H(+). Its activity is regulated as follows. MJ33 or lithium;[(2R)-1-hexadecoxy-3-(2,2,2-trifluoroethoxy)propan-2-yl] methyl phosphate inhibits its phospholipase A2 activity. CI-976 or 2,2-Dimethyl-N-(2,4,6-trimethoxyphenyl)dodecanamide inhibits its lysophosphatidylcholine acyltransferase activity. Functionally, thiol-specific peroxidase that catalyzes the reduction of hydrogen peroxide and organic hydroperoxides to water and alcohols, respectively. Can reduce H(2)O(2) and short chain organic, fatty acid, and phospholipid hydroperoxides. Has phospholipase activity. Can either reduce the oxidized sn-2 fatty acyl group of phospholipids (peroxidase activity) or hydrolyze the sn-2 ester bond of phospholipids (phospholipase activity). These activities are dependent on binding to phospholipids at acidic pH and to oxidized phospholipds at cytosolic pH. Plays a role in cell protection against oxidative stress by detoxifying peroxides and in phospholipid homeostasis. Exhibits acyl-CoA-dependent lysophospholipid acyltransferase which mediates the conversion of lysophosphatidylcholine (1-acyl-sn-glycero-3-phosphocholine or LPC) into phosphatidylcholine (1,2-diacyl-sn-glycero-3-phosphocholine or PC). Shows a clear preference for LPC as the lysophospholipid and for palmitoyl CoA as the fatty acyl substrate. The chain is Peroxiredoxin-6 (Prdx6) from Mus musculus (Mouse).